The primary structure comprises 461 residues: Tubulin gamma-2 chain (461 aa).

Residue 142 to 148 participates in GTP binding; it reads AGGTGSG.

Belongs to the tubulin family.

The protein resides in the cytoplasm. Its subcellular location is the cytoskeleton. The protein localises to the microtubule organizing center. It is found in the centrosome. Its function is as follows. Tubulin is the major constituent of microtubules. The gamma chain is found at microtubule organizing centers (MTOC) such as the spindle poles or the centrosome, suggesting that it is involved in the minus-end nucleation of microtubule assembly. This is Tubulin gamma-2 chain from Euplotoides octocarinatus (Freshwater ciliate).